The sequence spans 198 residues: Imidazole glycerol phosphate synthase subunit HisH (198 aa).

A Glutamine amidotransferase type-1 domain is found at 2-198 (KALLIDYGSG…ALARRYFEVL (197 aa)). C80 serves as the catalytic Nucleophile. Catalysis depends on residues H176 and E178.

As to quaternary structure, heterodimer of HisH and HisF.

It is found in the cytoplasm. The catalysed reaction is 5-[(5-phospho-1-deoxy-D-ribulos-1-ylimino)methylamino]-1-(5-phospho-beta-D-ribosyl)imidazole-4-carboxamide + L-glutamine = D-erythro-1-(imidazol-4-yl)glycerol 3-phosphate + 5-amino-1-(5-phospho-beta-D-ribosyl)imidazole-4-carboxamide + L-glutamate + H(+). It carries out the reaction L-glutamine + H2O = L-glutamate + NH4(+). It participates in amino-acid biosynthesis; L-histidine biosynthesis; L-histidine from 5-phospho-alpha-D-ribose 1-diphosphate: step 5/9. IGPS catalyzes the conversion of PRFAR and glutamine to IGP, AICAR and glutamate. The HisH subunit catalyzes the hydrolysis of glutamine to glutamate and ammonia as part of the synthesis of IGP and AICAR. The resulting ammonia molecule is channeled to the active site of HisF. The protein is Imidazole glycerol phosphate synthase subunit HisH of Thermus thermophilus (strain ATCC BAA-163 / DSM 7039 / HB27).